A 353-amino-acid chain; its full sequence is MSGNTLGTLFCVTNFGESHGPAIGCVVDGCPPGLPLEAADIQAELDRRRPGTSRHVTQRQEADQVEILSGVYEGVTTGTPIGLLIRNTDARSKDYSNIADTFRPGHADFAYWRKYGVRDPRGGGRSSARLTAPTVAAGAIAKKWLASQFGVRVRGYMSQLGPIAIPFSSWDDVPGNAFYAPNAAVVPELEAYMDQLRRDGDSVGARIEVVAEGLPAGWGEPIYDRLDADIAHAMMGLNAVKGVSLGAGFESIAQRGSEHGDEITPEGFASNHAGGVLGGISTGQPITVSLAIKPTSSIRVERRSVNRAGEPVMVQTLGRHDPCVGIRATPIAEALLALVLIDHALRQRAQCGG.

NADP(+) contacts are provided by Arg48 and Arg54. FMN is bound by residues 125–127, 238–239, Gly278, 293–297, and Arg319; these read RSS, NA, and KPTSS.

Belongs to the chorismate synthase family. As to quaternary structure, homotetramer. The cofactor is FMNH2.

The catalysed reaction is 5-O-(1-carboxyvinyl)-3-phosphoshikimate = chorismate + phosphate. Its pathway is metabolic intermediate biosynthesis; chorismate biosynthesis; chorismate from D-erythrose 4-phosphate and phosphoenolpyruvate: step 7/7. Catalyzes the anti-1,4-elimination of the C-3 phosphate and the C-6 proR hydrogen from 5-enolpyruvylshikimate-3-phosphate (EPSP) to yield chorismate, which is the branch point compound that serves as the starting substrate for the three terminal pathways of aromatic amino acid biosynthesis. This reaction introduces a second double bond into the aromatic ring system. In Bordetella pertussis (strain Tohama I / ATCC BAA-589 / NCTC 13251), this protein is Chorismate synthase.